The sequence spans 103 residues: N(4)-acetylcytidine amidohydrolase (103 aa).

The ASCH domain maps to 6 to 100; the sequence is ITFFQRFQED…AEDRFYVIEF (95 aa). Residue lysine 21 is the Proton acceptor of the active site. Threonine 24 acts as the Nucleophile in catalysis. Residue glutamate 74 is the Proton donor of the active site.

It belongs to the N(4)-acetylcytidine amidohydrolase family.

It carries out the reaction N(4)-acetylcytidine + H2O = cytidine + acetate + H(+). The catalysed reaction is N(4)-acetyl-2'-deoxycytidine + H2O = 2'-deoxycytidine + acetate + H(+). The enzyme catalyses N(4)-acetylcytosine + H2O = cytosine + acetate + H(+). Its function is as follows. Catalyzes the hydrolysis of N(4)-acetylcytidine (ac4C). This Klebsiella pneumoniae (strain 342) protein is N(4)-acetylcytidine amidohydrolase.